Here is a 298-residue protein sequence, read N- to C-terminus: Myoblast determination protein 1 homolog (298 aa).

The span at proline 53–arginine 73 shows a compositional bias: basic and acidic residues. The tract at residues proline 53–glycine 77 is disordered. In terms of domain architecture, bHLH spans aspartate 100–leucine 151. Disordered stretches follow at residues serine 170–serine 220 and cysteine 242–leucine 298. Composition is skewed to polar residues over residues serine 173 to serine 183 and cysteine 257 to glutamate 284.

Efficient DNA binding requires dimerization with another bHLH protein. Seems to form active heterodimers with ITF-2.

The protein resides in the nucleus. In terms of biological role, acts as a transcriptional activator that promotes transcription of muscle-specific target genes and plays a role in muscle differentiation. Induces fibroblasts to differentiate into myoblasts. Interacts with and is inhibited by the twist protein. This interaction probably involves the basic domains of both proteins. The protein is Myoblast determination protein 1 homolog (MYOD1) of Gallus gallus (Chicken).